A 649-amino-acid chain; its full sequence is MAFIKLLRKTKDEPSRLAKAVRHLQVTLDDPHATYRPRDVLFGQVLLDLKQNVANVRVRLTFIGEVKSKYGTAHKRGGCFMEKSTVLYGDDGDLDTDEMEPTVNGLTKGVHKFPFSIRVPSGKKIHSSIKFERGSVSYHLMAVFESVVEPEGVSAKVRTKVNILVPIDVYRYSDVVVKTILLNSNAKSKSHKINSNDHNGHLNGDVTTLTTSDGSSEGTKKTISESQIINNLSQRQVLQKSKSEGSKSESIQASTGQINQLPETSSQVSYNAVLTNGMNRDADNQTVKIDVRLPHSGFVQGEYIPLTINVSHYREYYHPAGVIATLVRVCKVASGRKEDTKEIYRKDICQSISPLLIESNKLENTISTYLKVPNDIIASMTSLPEHFTFQYFVEVVINLSRKLEIYSHSQKPLSYILEKQKTKKPLTIPRDLKELNLPASVNENGAWEVPRPSLNNEKSNGGIDSSRNDFQSKFGSAFNKSTLFGLKNIDEIHVAEQTIIFDDMVDVERLKRMRNVAGLSIETIIGNKRSSPAIDLAKLEISKLSQGKVMKSNGTSKNTSSSGSIESNSIVRYRYISFEQDTQSSTDSYDEDITKMGNQLNEWLSPANAYEEYYPVPEYSANENVFASEDKQELEYKRLHELESDPPQF.

Disordered stretches follow at residues 187 to 225, 239 to 262, and 446 to 466; these read KSKS…TISE, QKSK…NQLP, and AWEV…IDSS. Composition is skewed to polar residues over residues 205-217, 251-262, and 453-466; these read DVTT…GSSE, IQASTGQINQLP, and SLNN…IDSS.

The protein belongs to the arrestin family. PalF/RIM8 subfamily.

Its function is as follows. Required for the proteolytic cleavage of the transcription factor RIM101 in response to alkaline ambient pH. The chain is pH-response regulator protein palF/RIM8 (RIM8) from Candida glabrata (strain ATCC 2001 / BCRC 20586 / JCM 3761 / NBRC 0622 / NRRL Y-65 / CBS 138) (Yeast).